Consider the following 570-residue polypeptide: Urease subunit alpha (570 aa).

The Urease domain maps to 132 to 570; that stretch reads GGFDSHIHYI…LPLAQRYFLF (439 aa). 3 residues coordinate Ni(2+): histidine 137, histidine 139, and lysine 220. At lysine 220 the chain carries N6-carboxylysine. A substrate-binding site is contributed by histidine 222. Residues histidine 249 and histidine 275 each coordinate Ni(2+). Histidine 323 serves as the catalytic Proton donor. Aspartate 363 serves as a coordination point for Ni(2+).

Belongs to the metallo-dependent hydrolases superfamily. Urease alpha subunit family. Heterotrimer of UreA (gamma), UreB (beta) and UreC (alpha) subunits. Three heterotrimers associate to form the active enzyme. Ni cation serves as cofactor. Post-translationally, carboxylation allows a single lysine to coordinate two nickel ions.

It localises to the cytoplasm. It catalyses the reaction urea + 2 H2O + H(+) = hydrogencarbonate + 2 NH4(+). Its pathway is nitrogen metabolism; urea degradation; CO(2) and NH(3) from urea (urease route): step 1/1. This is Urease subunit alpha from Ruegeria sp. (strain TM1040) (Silicibacter sp.).